A 143-amino-acid chain; its full sequence is Transcriptional regulator MraZ (143 aa).

SpoVT-AbrB domains follow at residues 5–47 (EYQH…SLEE) and 76–119 (AAEV…DKSK).

This sequence belongs to the MraZ family. Forms oligomers.

The protein localises to the cytoplasm. Its subcellular location is the nucleoid. The chain is Transcriptional regulator MraZ from Acetivibrio thermocellus (strain ATCC 27405 / DSM 1237 / JCM 9322 / NBRC 103400 / NCIMB 10682 / NRRL B-4536 / VPI 7372) (Clostridium thermocellum).